The sequence spans 217 residues: Peroxiredoxin (217 aa).

Residues 2-159 (AVIGEKFPDV…VVRLVKALQT (158 aa)) form the Thioredoxin domain. The active-site Cysteine sulfenic acid (-SOH) intermediate is C46. Residue R122 participates in substrate binding.

It belongs to the peroxiredoxin family. Prx6 subfamily. Homodecamer. Pentamer of dimers that assemble into a ring structure.

The protein localises to the cytoplasm. It carries out the reaction a hydroperoxide + [thioredoxin]-dithiol = an alcohol + [thioredoxin]-disulfide + H2O. Its function is as follows. Thiol-specific peroxidase that catalyzes the reduction of hydrogen peroxide and organic hydroperoxides to water and alcohols, respectively. Plays a role in cell protection against oxidative stress by detoxifying peroxides. The protein is Peroxiredoxin of Methanococcus vannielii (strain ATCC 35089 / DSM 1224 / JCM 13029 / OCM 148 / SB).